The chain runs to 331 residues: Ferredoxin--NADP reductase (331 aa).

The FAD site is built by Glu38, Gln46, Tyr51, Ala91, Leu125, Asp282, and Ser323.

It belongs to the ferredoxin--NADP reductase type 2 family. As to quaternary structure, homodimer. FAD serves as cofactor.

The catalysed reaction is 2 reduced [2Fe-2S]-[ferredoxin] + NADP(+) + H(+) = 2 oxidized [2Fe-2S]-[ferredoxin] + NADPH. The sequence is that of Ferredoxin--NADP reductase from Deinococcus geothermalis (strain DSM 11300 / CIP 105573 / AG-3a).